A 407-amino-acid polypeptide reads, in one-letter code: Arginine biosynthesis bifunctional protein ArgJ (407 aa).

Substrate contacts are provided by threonine 169, lysine 192, threonine 203, glutamate 283, asparagine 402, and serine 407. Threonine 203 acts as the Nucleophile in catalysis.

It belongs to the ArgJ family. Heterotetramer of two alpha and two beta chains.

It localises to the cytoplasm. It catalyses the reaction N(2)-acetyl-L-ornithine + L-glutamate = N-acetyl-L-glutamate + L-ornithine. The enzyme catalyses L-glutamate + acetyl-CoA = N-acetyl-L-glutamate + CoA + H(+). Its pathway is amino-acid biosynthesis; L-arginine biosynthesis; L-ornithine and N-acetyl-L-glutamate from L-glutamate and N(2)-acetyl-L-ornithine (cyclic): step 1/1. It participates in amino-acid biosynthesis; L-arginine biosynthesis; N(2)-acetyl-L-ornithine from L-glutamate: step 1/4. Its function is as follows. Catalyzes two activities which are involved in the cyclic version of arginine biosynthesis: the synthesis of N-acetylglutamate from glutamate and acetyl-CoA as the acetyl donor, and of ornithine by transacetylation between N(2)-acetylornithine and glutamate. The sequence is that of Arginine biosynthesis bifunctional protein ArgJ from Mycobacterium leprae (strain TN).